Here is a 165-residue protein sequence, read N- to C-terminus: UPF0114 protein Ent638_3411 (165 aa).

A run of 3 helical transmembrane segments spans residues 15-35 (LLAP…IKFF), 53-73 (LILV…LVMV), and 136-156 (LMWY…MGYL).

Belongs to the UPF0114 family.

It is found in the cell membrane. The polypeptide is UPF0114 protein Ent638_3411 (Enterobacter sp. (strain 638)).